We begin with the raw amino-acid sequence, 164 residues long: Large ribosomal subunit protein uL15 (164 aa).

The span at 1 to 33 (MTSKKRRQRGSRTHGGGTHKNRRGAGHRGGRGR) shows a compositional bias: basic residues. Disordered stretches follow at residues 1–59 (MTSK…PGAE) and 137–164 (AGGS…NDEN). Residues 34 to 43 (AGRDKHEQHN) show a composition bias toward basic and acidic residues. Over residues 153 to 164 (GEDEEPNSNDEN) the composition is skewed to acidic residues.

The protein belongs to the universal ribosomal protein uL15 family. In terms of assembly, part of the 50S ribosomal subunit.

Its function is as follows. Binds to the 23S rRNA. The sequence is that of Large ribosomal subunit protein uL15 from Haloquadratum walsbyi (strain DSM 16790 / HBSQ001).